A 465-amino-acid polypeptide reads, in one-letter code: tRNA-2-methylthio-N(6)-dimethylallyladenosine synthase (465 aa).

One can recognise an MTTase N-terminal domain in the interval 5–125 (RKLHIKSYGC…LPELLKRAGN (121 aa)). Cys-14, Cys-50, Cys-88, Cys-166, Cys-170, and Cys-173 together coordinate [4Fe-4S] cluster. The 233-residue stretch at 152-384 (RARGISAFVT…QELIDSQQSA (233 aa)) folds into the Radical SAM core domain. Residues 387 to 449 (KAAIGSTVDV…RYSFLGELVT (63 aa)) form the TRAM domain.

This sequence belongs to the methylthiotransferase family. MiaB subfamily. In terms of assembly, monomer. Requires [4Fe-4S] cluster as cofactor.

Its subcellular location is the cytoplasm. It catalyses the reaction N(6)-dimethylallyladenosine(37) in tRNA + (sulfur carrier)-SH + AH2 + 2 S-adenosyl-L-methionine = 2-methylsulfanyl-N(6)-dimethylallyladenosine(37) in tRNA + (sulfur carrier)-H + 5'-deoxyadenosine + L-methionine + A + S-adenosyl-L-homocysteine + 2 H(+). In terms of biological role, catalyzes the methylthiolation of N6-(dimethylallyl)adenosine (i(6)A), leading to the formation of 2-methylthio-N6-(dimethylallyl)adenosine (ms(2)i(6)A) at position 37 in tRNAs that read codons beginning with uridine. The sequence is that of tRNA-2-methylthio-N(6)-dimethylallyladenosine synthase from Bradyrhizobium diazoefficiens (strain JCM 10833 / BCRC 13528 / IAM 13628 / NBRC 14792 / USDA 110).